The sequence spans 285 residues: Large ribosomal subunit protein uL1m (285 aa).

Residues 1-19 (MLSVVAIPKICVTGPARRC) constitute a mitochondrion transit peptide.

The protein belongs to the universal ribosomal protein uL1 family. In terms of assembly, component of the mitochondrial large ribosomal subunit (mt-LSU). Mature yeast 74S mitochondrial ribosomes consist of a small (37S) and a large (54S) subunit. The 37S small subunit contains a 15S ribosomal RNA (15S mt-rRNA) and 34 different proteins. The 54S large subunit contains a 21S rRNA (21S mt-rRNA) and 46 different proteins.

It localises to the mitochondrion. Its function is as follows. Component of the mitochondrial ribosome (mitoribosome), a dedicated translation machinery responsible for the synthesis of mitochondrial genome-encoded proteins, including at least some of the essential transmembrane subunits of the mitochondrial respiratory chain. The mitoribosomes are attached to the mitochondrial inner membrane and translation products are cotranslationally integrated into the membrane. The chain is Large ribosomal subunit protein uL1m (MRPL1) from Saccharomyces cerevisiae (strain ATCC 204508 / S288c) (Baker's yeast).